We begin with the raw amino-acid sequence, 466 residues long: A-type ATP synthase subunit B 2 (466 aa).

The protein belongs to the ATPase alpha/beta chains family. Has multiple subunits with at least A(3), B(3), C, D, E, F, H, I and proteolipid K(x).

It is found in the cell membrane. In terms of biological role, component of the A-type ATP synthase that produces ATP from ADP in the presence of a proton gradient across the membrane. The B chain is a regulatory subunit. The polypeptide is A-type ATP synthase subunit B 2 (Methanospirillum hungatei JF-1 (strain ATCC 27890 / DSM 864 / NBRC 100397 / JF-1)).